We begin with the raw amino-acid sequence, 239 residues long: Tumor necrosis factor ligand superfamily member 8 (239 aa).

The disordered stretch occupies residues 1–36 (MEPGLQQAGSCGAPSPDPAMQVQPGSVASPWRSTRP). The Cytoplasmic segment spans residues 1–43 (MEPGLQQAGSCGAPSPDPAMQVQPGSVASPWRSTRPWRSTSRS). Residues 44 to 67 (YFYLSTTALVCLVVAVAIILVLVV) form a helical; Signal-anchor for type II membrane protein membrane-spanning segment. Residues 68–239 (QKKDSTPNTT…LSVFLYSSSD (172 aa)) lie on the Extracellular side of the membrane. Residues Asn75, Asn86, Asn114, Asn158, Asn194, and Asn206 are each glycosylated (N-linked (GlcNAc...) asparagine). The THD domain maps to 103–230 (SWAYLQVSKH…TNTFPLDNVL (128 aa)). Cys156 and Cys182 are disulfide-bonded.

Belongs to the tumor necrosis factor family. As to quaternary structure, homotrimer.

Its subcellular location is the membrane. Its function is as follows. Cytokine that binds to TNFRSF8/CD30. Induces proliferation of T-cells. The protein is Tumor necrosis factor ligand superfamily member 8 (Tnfsf8) of Mus musculus (Mouse).